A 357-amino-acid polypeptide reads, in one-letter code: Protein NDRG2 (357 aa).

The span at 1–14 (MAELREVQITEEKP) shows a compositional bias: basic and acidic residues. A disordered region spans residues 1-26 (MAELREVQITEEKPLLPGQTPEVAKT). N-acetylalanine is present on Ala-2. Thr-20 carries the phosphothreonine modification. Residues Ser-312 and Ser-314 each carry the phosphoserine modification. Phosphothreonine is present on Thr-316. The residue at position 318 (Ser-318) is a Phosphoserine. A Phosphothreonine modification is found at Thr-320. A disordered region spans residues 320–357 (TSAASIDGNRSRSRTLSQSSESGTLSSGPPGHTMEVSC). Phosphoserine occurs at positions 321, 324, and 330. The segment covering 333-347 (RTLSQSSESGTLSSG) has biased composition (low complexity). Position 334 is a phosphothreonine (Thr-334). Phosphoserine occurs at positions 336, 338, 339, and 341. Thr-343 is subject to Phosphothreonine. Phosphoserine is present on Ser-356.

The protein belongs to the NDRG family. Interacts with CTNNB1.

Its subcellular location is the cytoplasm. The protein localises to the perinuclear region. The protein resides in the cell projection. It is found in the growth cone. In terms of biological role, contributes to the regulation of the Wnt signaling pathway. Down-regulates CTNNB1-mediated transcriptional activation of target genes, such as CCND1, and may thereby act as tumor suppressor. May be involved in dendritic cell and neuron differentiation. This is Protein NDRG2 (NDRG2) from Bos taurus (Bovine).